Reading from the N-terminus, the 341-residue chain is UDP-N-acetylenolpyruvoylglucosamine reductase (341 aa).

Residues 12 to 182 form the FAD-binding PCMH-type domain; sequence LSAYAKRLDI…ISVGLLLKKN (171 aa). The active site involves R158. Catalysis depends on S228, which acts as the Proton donor. E324 is an active-site residue.

Belongs to the MurB family. FAD is required as a cofactor.

It is found in the cytoplasm. It carries out the reaction UDP-N-acetyl-alpha-D-muramate + NADP(+) = UDP-N-acetyl-3-O-(1-carboxyvinyl)-alpha-D-glucosamine + NADPH + H(+). It functions in the pathway cell wall biogenesis; peptidoglycan biosynthesis. In terms of biological role, cell wall formation. The chain is UDP-N-acetylenolpyruvoylglucosamine reductase from Photorhabdus laumondii subsp. laumondii (strain DSM 15139 / CIP 105565 / TT01) (Photorhabdus luminescens subsp. laumondii).